A 164-amino-acid polypeptide reads, in one-letter code: MLGASVTVPSACSVLSLDVGRKRIGLAGCDPLGITVSPLPALHRGRFDNDLLVLRHHCQTRSVQGLVVGLPLDAAGQPTAQAEHCRRYGVRLAQSLGLPLAWVNEHSSTWAAGERHGLQGDRTGRLDSAAAALLLEQWLQDGPALKPAQSMAAGTGAEPIDGGS.

The protein belongs to the YqgF nuclease family.

It is found in the cytoplasm. Its function is as follows. Could be a nuclease involved in processing of the 5'-end of pre-16S rRNA. The sequence is that of Putative pre-16S rRNA nuclease from Synechococcus sp. (strain CC9902).